We begin with the raw amino-acid sequence, 235 residues long: tRNA (guanine-N(1)-)-methyltransferase (235 aa).

S-adenosyl-L-methionine-binding positions include G114 and 134 to 139 (IGDYIL).

The protein belongs to the RNA methyltransferase TrmD family. As to quaternary structure, homodimer.

The protein localises to the cytoplasm. The catalysed reaction is guanosine(37) in tRNA + S-adenosyl-L-methionine = N(1)-methylguanosine(37) in tRNA + S-adenosyl-L-homocysteine + H(+). Functionally, specifically methylates guanosine-37 in various tRNAs. The sequence is that of tRNA (guanine-N(1)-)-methyltransferase from Ehrlichia canis (strain Jake).